The following is a 394-amino-acid chain: Quinolinate synthase (394 aa).

Iminosuccinate contacts are provided by H57 and S74. A [4Fe-4S] cluster-binding site is contributed by C121. Iminosuccinate contacts are provided by residues 153–155 (YMN) and S174. C250 is a binding site for [4Fe-4S] cluster. Iminosuccinate is bound by residues 276–278 (HPE) and T293. [4Fe-4S] cluster is bound at residue C340.

The protein belongs to the quinolinate synthase family. Type 3 subfamily. It depends on [4Fe-4S] cluster as a cofactor.

It is found in the cytoplasm. It catalyses the reaction iminosuccinate + dihydroxyacetone phosphate = quinolinate + phosphate + 2 H2O + H(+). Its pathway is cofactor biosynthesis; NAD(+) biosynthesis; quinolinate from iminoaspartate: step 1/1. Its function is as follows. Catalyzes the condensation of iminoaspartate with dihydroxyacetone phosphate to form quinolinate. The sequence is that of Quinolinate synthase from Nocardioides sp. (strain ATCC BAA-499 / JS614).